A 119-amino-acid polypeptide reads, in one-letter code: NADH-quinone oxidoreductase subunit A (119 aa).

Transmembrane regions (helical) follow at residues 7 to 27, 63 to 83, and 88 to 108; these read FPVL…MTIG, LIAI…PWGV, and IGWP…VGFV.

Belongs to the complex I subunit 3 family. As to quaternary structure, NDH-1 is composed of 14 different subunits. Subunits NuoA, H, J, K, L, M, N constitute the membrane sector of the complex.

The protein resides in the cell inner membrane. It catalyses the reaction a quinone + NADH + 5 H(+)(in) = a quinol + NAD(+) + 4 H(+)(out). Functionally, NDH-1 shuttles electrons from NADH, via FMN and iron-sulfur (Fe-S) centers, to quinones in the respiratory chain. The immediate electron acceptor for the enzyme in this species is believed to be ubiquinone. Couples the redox reaction to proton translocation (for every two electrons transferred, four hydrogen ions are translocated across the cytoplasmic membrane), and thus conserves the redox energy in a proton gradient. The polypeptide is NADH-quinone oxidoreductase subunit A (Ralstonia nicotianae (strain ATCC BAA-1114 / GMI1000) (Ralstonia solanacearum)).